A 166-amino-acid polypeptide reads, in one-letter code: uncharacterized protein (166 aa).

This is an uncharacterized protein from Saccharomyces cerevisiae (strain ATCC 204508 / S288c) (Baker's yeast).